Here is a 238-residue protein sequence, read N- to C-terminus: Gas vesicle protein F (238 aa).

This sequence belongs to the gas vesicle GvpF/GvpL family. In terms of assembly, binds GvpA.

It localises to the gas vesicle. A minor component of the gas vesicle, may be involved in preventing GvpA aggregation during gas vesicle nucleation. Gas vesicles are hollow, gas filled proteinaceous nanostructures found in some microorganisms. It is not clear what function gas vesicles perform in soil bacteria. This chain is Gas vesicle protein F, found in Streptomyces sp. (strain CB03234).